A 675-amino-acid polypeptide reads, in one-letter code: Serine/threonine-protein kinase ATG1 (675 aa).

The Protein kinase domain occupies 25–328 (FVIGGEIGKG…FEDFFNDPVV (304 aa)). Residues 31-39 (IGKGSFAQV) and K54 contribute to the ATP site. D168 functions as the Proton acceptor in the catalytic mechanism. The span at 339–374 (DIPKVEQKPSRDLRSLEADPQREQSELAKSPRERPL) shows a compositional bias: basic and acidic residues. Disordered stretches follow at residues 339–455 (DIPK…ERKL) and 501–577 (RLTS…TTRS). Composition is skewed to polar residues over residues 390 to 399 (ANVSARTGQS), 516 to 538 (ATQQ…SAVQ), and 556 to 565 (ASRSLNTSSA).

This sequence belongs to the protein kinase superfamily. Ser/Thr protein kinase family. APG1/unc-51/ULK1 subfamily. As to quaternary structure, homodimer. Forms a ternary complex with ATG13 and ATG17.

Its subcellular location is the cytoplasm. It localises to the preautophagosomal structure membrane. The catalysed reaction is L-seryl-[protein] + ATP = O-phospho-L-seryl-[protein] + ADP + H(+). It carries out the reaction L-threonyl-[protein] + ATP = O-phospho-L-threonyl-[protein] + ADP + H(+). Serine/threonine protein kinase involved in the cytoplasm to vacuole transport (Cvt) and found to be essential in autophagy, where it is required for the formation of autophagosomes. Involved in the clearance of protein aggregates which cannot be efficiently cleared by the proteasome. Required for selective autophagic degradation of the nucleus (nucleophagy) as well as for mitophagy which contributes to regulate mitochondrial quantity and quality by eliminating the mitochondria to a basal level to fulfill cellular energy requirements and preventing excess ROS production. Also involved in endoplasmic reticulum-specific autophagic process, in selective removal of ER-associated degradation (ERAD) substrates. Plays a key role in ATG9 and ATG23 cycling through the pre-autophagosomal structure and is necessary to promote ATG18 binding to ATG9 through phosphorylation of ATG9. Catalyzes phosphorylation of ATG4, decreasing the interaction between ATG4 and ATG8 and impairing deconjugation of PE-conjugated forms of ATG8. The sequence is that of Serine/threonine-protein kinase ATG1 from Colletotrichum lindemuthianum (Bean anthracnose fungus).